We begin with the raw amino-acid sequence, 357 residues long: MTQEVLILPGDGIGPEITAEAVKVLEALQQKDNLDISMTHDLVGGAAYDQHGVPLAEETLEKAKQSDAILLGAVGGYQWESLDISVRPEKGLLALRSNLELFANLRPAYLFPQLADASTLKPEVVAGLDILIVRELTGGIYFGQPRGIRTLDNGERQGYNTYVYSESEIKRIAHVAFDAAMKRNKKLCSVDKANVLEVTEMWREIVDEVAKEYPEVEVQHMYVDNAAMQLVLNPKQFDVMVTGNMFGDILSDEASMLTGSIGMLASASLDANNKGMYEPSHGSAPDIAGQNIANPLATILSAAMMLRYSLNREDLALKIETAVSKVLDQGLRTGDIWSEGLTKVSTSEMGDAVVAAL.

76–89 (GYQWESLDISVRPE) is a binding site for NAD(+). Substrate contacts are provided by Arg-96, Arg-106, Arg-134, and Asp-224. Mg(2+) is bound by residues Asp-224, Asp-248, and Asp-252. 282–294 (GSAPDIAGQNIAN) provides a ligand contact to NAD(+).

It belongs to the isocitrate and isopropylmalate dehydrogenases family. LeuB type 1 subfamily. In terms of assembly, homodimer. Mg(2+) is required as a cofactor. It depends on Mn(2+) as a cofactor.

It localises to the cytoplasm. The catalysed reaction is (2R,3S)-3-isopropylmalate + NAD(+) = 4-methyl-2-oxopentanoate + CO2 + NADH. It functions in the pathway amino-acid biosynthesis; L-leucine biosynthesis; L-leucine from 3-methyl-2-oxobutanoate: step 3/4. In terms of biological role, catalyzes the oxidation of 3-carboxy-2-hydroxy-4-methylpentanoate (3-isopropylmalate) to 3-carboxy-4-methyl-2-oxopentanoate. The product decarboxylates to 4-methyl-2 oxopentanoate. The chain is 3-isopropylmalate dehydrogenase from Hydrogenovibrio crunogenus (strain DSM 25203 / XCL-2) (Thiomicrospira crunogena).